Consider the following 380-residue polypeptide: Crotonobetainyl-CoA reductase (380 aa).

The protein belongs to the acyl-CoA dehydrogenase family. In terms of assembly, homotetramer. FAD serves as cofactor.

It localises to the cytoplasm. It catalyses the reaction 4-(trimethylamino)butanoyl-CoA + oxidized [electron-transfer flavoprotein] + H(+) = crotonobetainyl-CoA + reduced [electron-transfer flavoprotein]. Its pathway is amine and polyamine metabolism; carnitine metabolism. Functionally, catalyzes the reduction of crotonobetainyl-CoA to gamma-butyrobetainyl-CoA. This chain is Crotonobetainyl-CoA reductase, found in Escherichia coli O6:K15:H31 (strain 536 / UPEC).